The primary structure comprises 1117 residues: Protein rliB (1117 aa).

An N-terminal signal peptide occupies residues 1-23; that stretch reads MKNINNKILKIFILFLAICSVKS. N-linked (GlcNAc...) asparagine glycans are attached at residues Asn136, Asn195, Asn279, and Asn318. The G8 domain occupies 266–392; it reads STWSNNLVPQ…YHNSWTKLAS (127 aa). PbH1 repeat units lie at residues 522 to 544 and 545 to 567; these read VQKSYISDCVVTKSYYRCYTIHG and TNNLTLTRNVAFDVNGHCYYLED. N-linked (GlcNAc...) asparagine glycans are attached at residues Asn547 and Asn605. Residues 621–642 form a PbH1 3 repeat; sequence NAYNTIIGNSASGGWAGFSFPN. Asn728, Asn845, Asn1030, Asn1044, Asn1091, and Asn1107 each carry an N-linked (GlcNAc...) asparagine glycan.

Belongs to the comF family.

Its subcellular location is the secreted. The chain is Protein rliB (rliB) from Dictyostelium discoideum (Social amoeba).